Consider the following 817-residue polypeptide: Probable beta-glucosidase G (817 aa).

The N-terminal stretch at 1 to 20 (MASIAHLIFSGLLAATVANS) is a signal peptide. N-linked (GlcNAc...) asparagine glycans are attached at residues Asn40, Asn58, Asn229, and Asn276. The active site involves Asp304. 10 N-linked (GlcNAc...) asparagine glycosylation sites follow: Asn343, Asn350, Asn402, Asn507, Asn563, Asn584, Asn623, Asn662, Asn679, and Asn715.

Belongs to the glycosyl hydrolase 3 family.

The protein resides in the secreted. The catalysed reaction is Hydrolysis of terminal, non-reducing beta-D-glucosyl residues with release of beta-D-glucose.. It functions in the pathway glycan metabolism; cellulose degradation. Functionally, beta-glucosidases are one of a number of cellulolytic enzymes involved in the degradation of cellulosic biomass. Catalyzes the last step releasing glucose from the inhibitory cellobiose. The protein is Probable beta-glucosidase G (bglG) of Neosartorya fischeri (strain ATCC 1020 / DSM 3700 / CBS 544.65 / FGSC A1164 / JCM 1740 / NRRL 181 / WB 181) (Aspergillus fischerianus).